The following is a 308-amino-acid chain: ATP synthase gamma chain (308 aa).

The protein belongs to the ATPase gamma chain family. As to quaternary structure, F-type ATPases have 2 components, CF(1) - the catalytic core - and CF(0) - the membrane proton channel. CF(1) has five subunits: alpha(3), beta(3), gamma(1), delta(1), epsilon(1). CF(0) has three main subunits: a, b and c.

It is found in the cell membrane. Its function is as follows. Produces ATP from ADP in the presence of a proton gradient across the membrane. The gamma chain is believed to be important in regulating ATPase activity and the flow of protons through the CF(0) complex. The chain is ATP synthase gamma chain from Lacticaseibacillus paracasei (strain ATCC 334 / BCRC 17002 / CCUG 31169 / CIP 107868 / KCTC 3260 / NRRL B-441) (Lactobacillus paracasei).